The chain runs to 445 residues: ATP-dependent protease ATPase subunit HslU (445 aa).

Residues isoleucine 17, 59–64 (GVGKTE), aspartate 254, glutamate 319, and arginine 391 contribute to the ATP site.

The protein belongs to the ClpX chaperone family. HslU subfamily. As to quaternary structure, a double ring-shaped homohexamer of HslV is capped on each side by a ring-shaped HslU homohexamer. The assembly of the HslU/HslV complex is dependent on binding of ATP.

The protein localises to the cytoplasm. In terms of biological role, ATPase subunit of a proteasome-like degradation complex; this subunit has chaperone activity. The binding of ATP and its subsequent hydrolysis by HslU are essential for unfolding of protein substrates subsequently hydrolyzed by HslV. HslU recognizes the N-terminal part of its protein substrates and unfolds these before they are guided to HslV for hydrolysis. In Pseudomonas savastanoi pv. phaseolicola (strain 1448A / Race 6) (Pseudomonas syringae pv. phaseolicola (strain 1448A / Race 6)), this protein is ATP-dependent protease ATPase subunit HslU.